Reading from the N-terminus, the 294-residue chain is N-acetylmuramic acid 6-phosphate etherase (294 aa).

The SIS domain maps to valine 54–lysine 217. Catalysis depends on glutamate 82, which acts as the Proton donor. Glutamate 113 is a catalytic residue.

It belongs to the GCKR-like family. MurNAc-6-P etherase subfamily. As to quaternary structure, homodimer.

It catalyses the reaction N-acetyl-D-muramate 6-phosphate + H2O = N-acetyl-D-glucosamine 6-phosphate + (R)-lactate. It participates in amino-sugar metabolism; N-acetylmuramate degradation. Specifically catalyzes the cleavage of the D-lactyl ether substituent of MurNAc 6-phosphate, producing GlcNAc 6-phosphate and D-lactate. This Bacillus cereus (strain ATCC 14579 / DSM 31 / CCUG 7414 / JCM 2152 / NBRC 15305 / NCIMB 9373 / NCTC 2599 / NRRL B-3711) protein is N-acetylmuramic acid 6-phosphate etherase.